Here is a 510-residue protein sequence, read N- to C-terminus: 2-isopropylmalate synthase (510 aa).

In terms of domain architecture, Pyruvate carboxyltransferase spans 5–267 (LVIFDTTLRD…DTRIDTTQIV (263 aa)). The Mn(2+) site is built by Asp-14, His-202, His-204, and Asn-238. Residues 392-510 (RLLSLVAHSE…SSLERTHPQV (119 aa)) form a regulatory domain region.

This sequence belongs to the alpha-IPM synthase/homocitrate synthase family. LeuA type 1 subfamily. In terms of assembly, homodimer. Mn(2+) serves as cofactor.

It localises to the cytoplasm. It carries out the reaction 3-methyl-2-oxobutanoate + acetyl-CoA + H2O = (2S)-2-isopropylmalate + CoA + H(+). The protein operates within amino-acid biosynthesis; L-leucine biosynthesis; L-leucine from 3-methyl-2-oxobutanoate: step 1/4. Its function is as follows. Catalyzes the condensation of the acetyl group of acetyl-CoA with 3-methyl-2-oxobutanoate (2-ketoisovalerate) to form 3-carboxy-3-hydroxy-4-methylpentanoate (2-isopropylmalate). The chain is 2-isopropylmalate synthase from Nitrosomonas eutropha (strain DSM 101675 / C91 / Nm57).